The sequence spans 565 residues: Methionine--tRNA ligase (565 aa).

The short motif at 16–26 is the 'HIGH' region element; it reads PYAYGVPHLGN. C148, C151, C161, and C164 together coordinate Zn(2+). The short motif at 338–342 is the 'KMSKS' region element; it reads KFSKS. K341 provides a ligand contact to ATP.

This sequence belongs to the class-I aminoacyl-tRNA synthetase family. MetG type 1 subfamily. It depends on Zn(2+) as a cofactor.

It is found in the cytoplasm. The enzyme catalyses tRNA(Met) + L-methionine + ATP = L-methionyl-tRNA(Met) + AMP + diphosphate. Its function is as follows. Is required not only for elongation of protein synthesis but also for the initiation of all mRNA translation through initiator tRNA(fMet) aminoacylation. In Thermofilum pendens (strain DSM 2475 / Hrk 5), this protein is Methionine--tRNA ligase.